Reading from the N-terminus, the 610-residue chain is DNA mismatch repair protein MutL (610 aa).

The disordered stretch occupies residues 351 to 406 (GQRPQAPWSAETSPSRPYQPAPAFSERPQASFDGLSTPTARAEPQFSPDPVSPGLA).

Belongs to the DNA mismatch repair MutL/HexB family.

In terms of biological role, this protein is involved in the repair of mismatches in DNA. It is required for dam-dependent methyl-directed DNA mismatch repair. May act as a 'molecular matchmaker', a protein that promotes the formation of a stable complex between two or more DNA-binding proteins in an ATP-dependent manner without itself being part of a final effector complex. The sequence is that of DNA mismatch repair protein MutL from Rhizobium etli (strain ATCC 51251 / DSM 11541 / JCM 21823 / NBRC 15573 / CFN 42).